The sequence spans 1940 residues: Rho GTPase-activating protein 32 (1940 aa).

The 95-residue stretch at 154-248 folds into the PX; atypical domain; sequence SKELVFLVQI…LTWMEIDNKG (95 aa). The SH3 domain maps to 262-324; sequence PAIAAAHVIK…PSECVELIND (63 aa). One can recognise a Rho-GAP domain in the interval 375–570; the sequence is CDLGEHLLNS…FILNHVEVLF (196 aa). 5 disordered regions span residues 646–746, 1035–1163, 1219–1264, 1430–1454, and 1675–1786; these read FPSE…LSAS, RANQ…FSVT, FTTG…PPVR, KHPR…YTED, and RSRS…HSSA. The segment covering 1047–1061 has biased composition (polar residues); sequence PQGASASESPQELSH. 2 stretches are compositionally biased toward low complexity: residues 1081 to 1094 and 1145 to 1163; these read LALA…QASA and SRKT…FSVT. Positions 1691-1707 are enriched in basic and acidic residues; that stretch reads ETKDVRYPGRTEGDERT. The segment covering 1725-1734 has biased composition (polar residues); it reads PQKQSGSSRS. Residues 1736–1755 show a composition bias toward basic and acidic residues; it reads MQHDISTEQHSQDTLHRQPS.

It belongs to the PX domain-containing GAP family.

The protein localises to the cytoplasm. Its subcellular location is the membrane. The protein resides in the cell membrane. Functionally, GTPase-activating protein (GAP) promoting GTP hydrolysis on RHOA, CDC42 and RAC1 small GTPases. This is Rho GTPase-activating protein 32 (arhgap32) from Xenopus laevis (African clawed frog).